A 549-amino-acid chain; its full sequence is Zinc finger protein 382 (549 aa).

The tract at residues 1–105 (MNCHSVPLQG…DKPPTSIVII (105 aa)) is mediates interaction with TRIM28. Represses transcription stretches follow at residues 10–51 (GPVS…FISV) and 75–210 (MFPS…PEQR). One can recognise a KRAB domain in the interval 12 to 83 (VSFKDVTVDF…RMFPSQSYLE (72 aa)). C2H2-type zinc fingers lie at residues 211–233 (FECD…DRAH), 295–317 (FQCP…QRIH), 323–345 (YICS…EKTH), 351–373 (YLCV…HKTH), 379–401 (YECT…QRTH), 407–429 (YQCA…QRTH), 435–457 (YMCS…QRIH), 463–485 (YVCS…YRIH), 491–513 (NGCP…QKTH), and 519–541 (YECH…QKTH). Residues 295-549 (FQCPYCGNSF…THKAETVRFQ (255 aa)) form a required for transcriptional repression activity; probably mediates sequence-specific DNA-binding region.

Belongs to the krueppel C2H2-type zinc-finger protein family. As to quaternary structure, interacts with TRIM28; enhances the transcriptional repressor activity. As to expression, ubiquitously expressed with higher expression in lung, kidney and testis.

It is found in the nucleus. Functions as a sequence-specific transcriptional repressor. This chain is Zinc finger protein 382 (Znf382), found in Rattus norvegicus (Rat).